Here is a 125-residue protein sequence, read N- to C-terminus: 17 kDa gas vesicle protein (125 aa).

Belongs to the gas vesicle GvpC family.

The protein localises to the gas vesicle. In terms of biological role, gas vesicles (GV) are hollow, gas filled proteinaceous nanostructures. During planktonic growth they allow positioning of the organism at a favorable depth for light or nutrient acquisition. The sequence is that of 17 kDa gas vesicle protein from Dactylococcopsis salina (strain PCC 8305) (Myxobactron salinum).